Consider the following 519-residue polypeptide: MSEKEQQEQQNTSGNGVEKIRTMIEGFDDISHGGLPVGRTTLVSGTSGTGKTLLSLQFLFNGISFFDEPGVFVTFEESPSDIIKNAHIFGWNLQRLINEGKLFILDASPDPEGQDIVGNFDLSALIERLQYAIRKYKAKRVSIDSITAVFQQYEAVGVVRREIFRLVARLKQLNVTTIITTERSEEYGPVASFGVEEFVSDNVVIARNVLEGERRRRTIEILKLRGTTHMKGEYPFTITNDGVNIFPLGAMRLTQRSSNVRVSSGVKTLDGMCGGGFFKDSIILATGATGTGKTLLVSKFLQNGCVNNERAILFAYEESRAQLSRNAYSWGIDFEELESQGLLKIICTYPESTGLEDHLQIIKSEIAYFKPARIAIDSLSALARGVSNNAFRQFVIGVTGYAKQEEITGFFTNTTDQFMGSHSITDSHISTITDTILMLQYVEIRGEMSRAINVFKMRGSWHDKGIREYNITADGPEIQDSFRNYERIVSGSPTRVSIDEKAELSRIVRRFEDKQGSDS.

2 KaiC domains span residues 1 to 246 and 260 to 519; these read MSEK…VNIF and VRVS…GSDS. Residues Gly-48, Thr-49, Gly-50, Lys-51, Thr-52, Leu-53, Lys-223, Leu-224, Arg-225, Thr-227, His-229, Thr-239, Thr-289, Gly-290, Thr-291, Gly-292, Lys-293, Thr-294, and Leu-295 each contribute to the ATP site. A Mg(2+)-binding site is contributed by Thr-52. Thr-294 contributes to the Mg(2+) binding site. Residue Glu-317 participates in Mg(2+) binding. Residue Trp-330 participates in ATP binding. The residue at position 430 (Ser-430) is a Phosphoserine; by autocatalysis. Thr-431 is modified (phosphothreonine; by autocatalysis). ATP is bound by residues Arg-450, Lys-456, Met-457, Arg-458, Ser-460, His-462, and Lys-464.

It belongs to the KaiC family. As to quaternary structure, homohexamer; hexamerization is dependent on ATP-binding. The KaiABC complex composition changes during the circadian cycle to control KaiC phosphorylation. Complexes KaiC(6), KaiA(2-4):KaiC(6), KaiB(6):KaiC(6) and KaiC(6):KaiB(6):KaiA(12) are among the most important forms, many form cooperatively. KaiC interacts with SasA, activating its autokinase function and leading to RpaA activation. Requires Mg(2+) as cofactor. Post-translationally, phosphorylated on serine and threonine residues by autocatalysis. Has a 4 step phosphorylation cycle; the autokinase acts first on Thr-431, then Ser-430. When Ser-430 is modified KaiC switches to an autophosphatase mode, acting first on phospho-Thr-431 then phospho-Ser-430.

It catalyses the reaction L-seryl-[protein] + ATP = O-phospho-L-seryl-[protein] + ADP + H(+). The catalysed reaction is L-threonyl-[protein] + ATP = O-phospho-L-threonyl-[protein] + ADP + H(+). It carries out the reaction ATP + H2O = ADP + phosphate + H(+). With respect to regulation, the interaction with KaiA enhances its phosphorylation status, while the interaction with KaiB decreases it. Functionally, central component of the KaiABC oscillator complex, which constitutes the main circadian regulator in cyanobacteria. Complex composition changes during the circadian cycle to control KaiC phosphorylation. KaiA stimulates KaiC autophosphorylation, while KaiB sequesters KaiA, leading to KaiC autodephosphorylation. Clock output pathways impact the RpaA transcriptional regulator. KaiC enhances the autophosphorylation activity of SasA, which then transfers its phosphate group to RpaA to activate it. KaiB and KaiC together enhance the phospho-RpaA dephosphatase activity of CikA. Its function is as follows. Has a weak, temperature-independent ATPase activity; ATPase activity defines the circadian period. The phosphorylation state of KaiC modulates its ATPase activity and effects KaiB binding. The sequence is that of Circadian clock oscillator protein KaiC from Nostoc sp. (strain PCC 7120 / SAG 25.82 / UTEX 2576).